The sequence spans 169 residues: Ubiquitin-fold modifier-conjugating enzyme 1 (169 aa).

Cys-116 serves as the catalytic Glycyl thioester intermediate.

It belongs to the ubiquitin-conjugating enzyme family. UFC1 subfamily.

Its function is as follows. E2-like enzyme which forms an intermediate with UFM1 via a thioester linkage. The protein is Ubiquitin-fold modifier-conjugating enzyme 1 of Branchiostoma floridae (Florida lancelet).